The primary structure comprises 1157 residues: DNA-directed RNA polymerase subunit beta (1157 aa).

The protein belongs to the RNA polymerase beta chain family. In terms of assembly, the RNAP catalytic core consists of 2 alpha, 1 beta, 1 beta' and 1 omega subunit. When a sigma factor is associated with the core the holoenzyme is formed, which can initiate transcription.

It catalyses the reaction RNA(n) + a ribonucleoside 5'-triphosphate = RNA(n+1) + diphosphate. In terms of biological role, DNA-dependent RNA polymerase catalyzes the transcription of DNA into RNA using the four ribonucleoside triphosphates as substrates. This Tropheryma whipplei (strain TW08/27) (Whipple's bacillus) protein is DNA-directed RNA polymerase subunit beta.